A 157-amino-acid polypeptide reads, in one-letter code: Regenerating islet-derived protein 4 (157 aa).

Residues Met1–Ser22 form the signal peptide. A disulfide bridge links Cys29 with Cys40. Positions Tyr36–Lys154 constitute a C-type lectin domain. N-linked (GlcNAc...) asparagine glycosylation is found at Asn49 and Asn62. 2 cysteine pairs are disulfide-bonded: Cys57-Cys153 and Cys128-Cys145. A carbohydrate contacts are provided by residues Asp97–Gln102 and Lys134–Lys136.

Its subcellular location is the secreted. Functionally, calcium-independent lectin displaying mannose-binding specificity and able to maintain carbohydrate recognition activity in an acidic environment. May be involved in inflammatory and metaplastic responses of the gastrointestinal epithelium. The chain is Regenerating islet-derived protein 4 (Reg4) from Mus musculus (Mouse).